The following is a 573-amino-acid chain: 60 kDa heat shock protein, mitochondrial (573 aa).

Residues 1 to 26 constitute a mitochondrion transit peptide; the sequence is MLRLPAVLRQIRPVSRALAPHLTRAY. ATP-binding positions include Lys75 and 111-115; that span reads DGTTT. Position 227 is a phosphotyrosine (Tyr227). ATP is bound by residues Gly440 and Asp520.

The protein localises to the mitochondrion matrix. The catalysed reaction is ATP + H2O + a folded polypeptide = ADP + phosphate + an unfolded polypeptide.. Its function is as follows. Chaperonin implicated in mitochondrial protein import and macromolecular assembly. Together with Hsp10, facilitates the correct folding of imported proteins. May also prevent misfolding and promote the refolding and proper assembly of unfolded polypeptides generated under stress conditions in the mitochondrial matrix. The functional units of these chaperonins consist of heptameric rings of the large subunit Hsp60, which function as a back-to-back double ring. In a cyclic reaction, Hsp60 ring complexes bind one unfolded substrate protein per ring, followed by the binding of ATP and association with 2 heptameric rings of the co-chaperonin Hsp10. This leads to sequestration of the substrate protein in the inner cavity of Hsp60 where, for a certain period of time, it can fold undisturbed by other cell components. Synchronous hydrolysis of ATP in all Hsp60 subunits results in the dissociation of the chaperonin rings and the release of ADP and the folded substrate protein. The sequence is that of 60 kDa heat shock protein, mitochondrial from Gallus gallus (Chicken).